The following is a 410-amino-acid chain: Demethyl-4-deoxygadusol synthase (410 aa).

NAD(+) is bound by residues 56-58, 87-90, 119-123, 143-144, lysine 156, lysine 165, and 183-186; these read DAN, EPDK, GLITD, TT, and LLRT. Residues glutamate 198, histidine 271, and histidine 287 each coordinate Zn(2+).

It belongs to the sugar phosphate cyclases superfamily. DDGS family. In terms of assembly, homodimer. NAD(+) serves as cofactor. Co(2+) is required as a cofactor. It depends on Zn(2+) as a cofactor.

The enzyme catalyses D-sedoheptulose 7-phosphate = (R)-demethyl-4-deoxygadusol + phosphate + H2O + H(+). Its function is as follows. Catalyzes the conversion of sedoheptulose 7-phosphate to demethyl-4-deoxygadusol (DDG). Involved in the synthesis of the mycosporine-like amino acid shinorine, a natural sunscreen compound that protects the cell against UV radiation. The sequence is that of Demethyl-4-deoxygadusol synthase from Trichormus variabilis (strain ATCC 29413 / PCC 7937) (Anabaena variabilis).